The chain runs to 155 residues: D-aminoacyl-tRNA deacylase (155 aa).

A Gly-cisPro motif, important for rejection of L-amino acids motif is present at residues 147 to 148; that stretch reads GP.

The protein belongs to the DTD family. Homodimer.

The protein resides in the cytoplasm. The enzyme catalyses glycyl-tRNA(Ala) + H2O = tRNA(Ala) + glycine + H(+). The catalysed reaction is a D-aminoacyl-tRNA + H2O = a tRNA + a D-alpha-amino acid + H(+). Its function is as follows. An aminoacyl-tRNA editing enzyme that deacylates mischarged D-aminoacyl-tRNAs. Also deacylates mischarged glycyl-tRNA(Ala), protecting cells against glycine mischarging by AlaRS. Acts via tRNA-based rather than protein-based catalysis; rejects L-amino acids rather than detecting D-amino acids in the active site. By recycling D-aminoacyl-tRNA to D-amino acids and free tRNA molecules, this enzyme counteracts the toxicity associated with the formation of D-aminoacyl-tRNA entities in vivo and helps enforce protein L-homochirality. The polypeptide is D-aminoacyl-tRNA deacylase (Corynebacterium urealyticum (strain ATCC 43042 / DSM 7109)).